The sequence spans 465 residues: Poly(A) polymerase I (465 aa).

Active-site residues include aspartate 80, aspartate 82, and aspartate 162. The tract at residues 429–465 is disordered; it reads SAPPDQKGMLNELDEEPSPRRRTRRPRKRAPRREGTA. A compositionally biased stretch (basic residues) spans 448–459; sequence RRRTRRPRKRAP.

The protein belongs to the tRNA nucleotidyltransferase/poly(A) polymerase family.

It catalyses the reaction RNA(n) + ATP = RNA(n)-3'-adenine ribonucleotide + diphosphate. Functionally, adds poly(A) tail to the 3' end of many RNAs, which usually targets these RNAs for decay. Plays a significant role in the global control of gene expression, through influencing the rate of transcript degradation, and in the general RNA quality control. The polypeptide is Poly(A) polymerase I (Escherichia coli O157:H7).